The chain runs to 342 residues: N-acetyl-gamma-glutamyl-phosphate reductase (342 aa).

The active site involves Cys149.

This sequence belongs to the NAGSA dehydrogenase family. Type 1 subfamily.

The protein localises to the cytoplasm. The enzyme catalyses N-acetyl-L-glutamate 5-semialdehyde + phosphate + NADP(+) = N-acetyl-L-glutamyl 5-phosphate + NADPH + H(+). It functions in the pathway amino-acid biosynthesis; L-arginine biosynthesis; N(2)-acetyl-L-ornithine from L-glutamate: step 3/4. Catalyzes the NADPH-dependent reduction of N-acetyl-5-glutamyl phosphate to yield N-acetyl-L-glutamate 5-semialdehyde. This is N-acetyl-gamma-glutamyl-phosphate reductase from Cereibacter sphaeroides (strain ATCC 17029 / ATH 2.4.9) (Rhodobacter sphaeroides).